The chain runs to 114 residues: PDZK1-interacting protein 1 (114 aa).

The Extracellular segment spans residues 1–28 (MSVLSLVVLSLLMALPPASCQQGRGNLQ). A helical membrane pass occupies residues 29–51 (PWMQGLIAVAVFLVLVAIAFAVN). Topologically, residues 52–114 (HFWCQEKPAP…EEGKVCSTPM (63 aa)) are cytoplasmic. Phosphoserine is present on Ser-85.

This sequence belongs to the PDZK1-interacting protein 1/SMIM24 family. Forms a heterodimer (via N-terminal transmembrane helix) with SLC5A2/SGLT2 (via TM13); this interaction enhances SLC5A2 transporter activity. Interacts with PDZK1.

It is found in the apical cell membrane. Auxiliary protein of electrogenic Na(+)-coupled sugar symporter SLC5A2/SGLT2 and SLC5A1/SGLT1. Essential for the transporter activity of SLC5A2/SGLT2 but not SLC5A1/SGLT1. This is PDZK1-interacting protein 1 from Bos taurus (Bovine).